Reading from the N-terminus, the 345-residue chain is 3'-5' exoribonuclease 1 (345 aa).

Basic and acidic residues-rich tracts occupy residues 1-11 (MEDERGREHGG) and 19-40 (PRPE…CRLD). A disordered region spans residues 1 to 40 (MEDERGREHGGDAAQQKTPRPECEESRPLSVEKKQRCRLD). Ser58 carries the phosphoserine modification. One can recognise an SAP domain in the interval 72 to 106 (INRMSKEELRAKLSEFKLETRGVKDVLKKRLKNYY). The region spanning 126-302 (ICIIDFEATC…DDSKNIARIA (177 aa)) is the Exonuclease domain. The Mg(2+) site is built by Asp130 and Glu132. The Proton acceptor role is filled by Glu132. AMP contacts are provided by Glu132 and Ala133. Residue Asp230 participates in Mg(2+) binding. The active-site Proton acceptor is the His289. An AMP-binding site is contributed by His289. Position 294 (Asp294) interacts with Mg(2+).

Identified in a histone pre-mRNA complex, at least composed of ERI1, LSM11, SLBP, SNRPB, SYNCRIP and YBX1. Binds to 40S and 60S ribosomal subunits and to 80S assembled ribosomes. Interacts in a cooperative manner with SLBP to the mature 3'-end of histone mRNAs. Found in a ternary complex with SLBP and the stem-loop structure of the 3'-end of histone mRNAs. Mg(2+) serves as cofactor.

It is found in the cytoplasm. It localises to the nucleus. The protein resides in the nucleolus. The enzyme catalyses Exonucleolytic cleavage in the 3'- to 5'-direction to yield nucleoside 5'-phosphates.. Its activity is regulated as follows. Although it can bind simultaneously with SLBP to the 3'-end of histone mRNA, the presence of SLBP prevents the exonuclease activity. RNA exonuclease that binds to the 3'-end of histone mRNAs and degrades them, suggesting that it plays an essential role in histone mRNA decay after replication. A 2' and 3'-hydroxyl groups at the last nucleotide of the histone 3'-end is required for efficient 3'-end histone mRNA exonuclease activity and degradation of RNA substrates. Also able to degrade the 3'-overhangs of short interfering RNAs (siRNAs) in vitro, suggesting a possible role as regulator of RNA interference (RNAi). Required for binding the 5'-ACCCA-3' sequence present in stem-loop structure. Able to bind other mRNAs. Required for 5.8S rRNA 3'-end processing. Also binds to 5.8s ribosomal RNA. Binds with high affinity to the stem-loop structure of replication-dependent histone pre-mRNAs. In vitro, does not have sequence specificity. In vitro, has weak DNA exonuclease activity. In vitro, shows biphasic kinetics such that there is rapid hydrolysis of the last three unpaired RNA nucleotides in the 39 flanking sequence followed by a much slower cleavage through the stem that occurs over a longer incubation period in the order of hours. ERI1-mediated RNA metabolism plays a key role in chondrogenesis. The polypeptide is 3'-5' exoribonuclease 1 (Eri1) (Rattus norvegicus (Rat)).